Reading from the N-terminus, the 356-residue chain is Protein-glutamate methylesterase/protein-glutamine glutaminase 2 (356 aa).

Residues arginine 4 to glutamate 121 enclose the Response regulatory domain. Residue aspartate 55 is modified to 4-aspartylphosphate. Residues lysine 161 to glycine 356 enclose the CheB-type methylesterase domain. Active-site residues include serine 173, histidine 200, and aspartate 300.

Belongs to the CheB family. In terms of processing, phosphorylated by CheA. Phosphorylation of the N-terminal regulatory domain activates the methylesterase activity.

The protein resides in the cytoplasm. It carries out the reaction [protein]-L-glutamate 5-O-methyl ester + H2O = L-glutamyl-[protein] + methanol + H(+). It catalyses the reaction L-glutaminyl-[protein] + H2O = L-glutamyl-[protein] + NH4(+). Functionally, involved in chemotaxis. Part of a chemotaxis signal transduction system that modulates chemotaxis in response to various stimuli. Catalyzes the demethylation of specific methylglutamate residues introduced into the chemoreceptors (methyl-accepting chemotaxis proteins or MCP) by CheR. Also mediates the irreversible deamidation of specific glutamine residues to glutamic acid. The chain is Protein-glutamate methylesterase/protein-glutamine glutaminase 2 from Methanosarcina acetivorans (strain ATCC 35395 / DSM 2834 / JCM 12185 / C2A).